A 347-amino-acid polypeptide reads, in one-letter code: DNA-directed RNA polymerase subunit alpha (347 aa).

Positions 1-226 are alpha N-terminal domain (alpha-NTD); sequence MLISQRPTLS…ELFGLARELN (226 aa). Residues 243-347 are alpha C-terminal domain (alpha-CTD); it reads HIASFALPID…EQDYAETEQL (105 aa).

This sequence belongs to the RNA polymerase alpha chain family. Homodimer. The RNAP catalytic core consists of 2 alpha, 1 beta, 1 beta' and 1 omega subunit. When a sigma factor is associated with the core the holoenzyme is formed, which can initiate transcription.

It catalyses the reaction RNA(n) + a ribonucleoside 5'-triphosphate = RNA(n+1) + diphosphate. Its function is as follows. DNA-dependent RNA polymerase catalyzes the transcription of DNA into RNA using the four ribonucleoside triphosphates as substrates. This is DNA-directed RNA polymerase subunit alpha from Mycobacterium bovis (strain ATCC BAA-935 / AF2122/97).